The following is a 222-amino-acid chain: Eukaryotic translation initiation factor 3 subunit K (222 aa).

Residues 46-208 form the PCI domain; it reads YDLEANLAVL…KIKTKNITEK (163 aa).

The protein belongs to the eIF-3 subunit K family. In terms of assembly, component of the eukaryotic translation initiation factor 3 (eIF-3) complex. The eIF-3 complex interacts with pix.

Its subcellular location is the cytoplasm. In terms of biological role, component of the eukaryotic translation initiation factor 3 (eIF-3) complex, which is involved in protein synthesis of a specialized repertoire of mRNAs and, together with other initiation factors, stimulates binding of mRNA and methionyl-tRNAi to the 40S ribosome. The eIF-3 complex specifically targets and initiates translation of a subset of mRNAs involved in cell proliferation. The polypeptide is Eukaryotic translation initiation factor 3 subunit K (Drosophila sechellia (Fruit fly)).